The primary structure comprises 432 residues: D-amino acid dehydrogenase 1 (432 aa).

3 to 17 (VLILGSGVVGTVSAY) contacts FAD.

It belongs to the DadA oxidoreductase family. FAD serves as cofactor.

The catalysed reaction is a D-alpha-amino acid + A + H2O = a 2-oxocarboxylate + AH2 + NH4(+). Oxidative deamination of D-amino acids. This chain is D-amino acid dehydrogenase 1 (dadA1), found in Pseudomonas putida (strain ATCC 47054 / DSM 6125 / CFBP 8728 / NCIMB 11950 / KT2440).